A 671-amino-acid polypeptide reads, in one-letter code: DNA ligase (671 aa).

Residues aspartate 32–aspartate 36, serine 81–leucine 82, and glutamate 113 contribute to the NAD(+) site. The active-site N6-AMP-lysine intermediate is lysine 115. Residues arginine 136, glutamate 173, lysine 290, and lysine 314 each coordinate NAD(+). Cysteine 408, cysteine 411, cysteine 426, and cysteine 432 together coordinate Zn(2+). The region spanning glutamate 593–glutamate 671 is the BRCT domain.

The protein belongs to the NAD-dependent DNA ligase family. LigA subfamily. Requires Mg(2+) as cofactor. Mn(2+) serves as cofactor.

It carries out the reaction NAD(+) + (deoxyribonucleotide)n-3'-hydroxyl + 5'-phospho-(deoxyribonucleotide)m = (deoxyribonucleotide)n+m + AMP + beta-nicotinamide D-nucleotide.. In terms of biological role, DNA ligase that catalyzes the formation of phosphodiester linkages between 5'-phosphoryl and 3'-hydroxyl groups in double-stranded DNA using NAD as a coenzyme and as the energy source for the reaction. It is essential for DNA replication and repair of damaged DNA. This is DNA ligase from Klebsiella pneumoniae (strain 342).